The following is a 747-amino-acid chain: Endoglucanase C (747 aa).

Residues 1–37 (MGHVTSPSKRYPASFKRAGSILGVSIALAAFSNVAAA) form the signal peptide. A CBM2 domain is found at 38–136 (GCEYVVTNSW…TVNGAACTGG (99 aa)). 3 cysteine pairs are disulfide-bonded: cysteine 39/cysteine 133, cysteine 183/cysteine 214, and cysteine 193/cysteine 208. The CBM10 domain maps to 182–211 (QCNWYGTLYPLCVSTTSGWGYENNRSCISP). The interval 226 to 283 (GSSSPSSISSSSVRSSSSSSVVPPSSSSSSSVPSSSSSSVSSSSVVSSSSSSVSVPGT) is disordered. The span at 227–281 (SSSPSSISSSSVRSSSSSSVVPPSSSSSSSVPSSSSSSVSSSSVVSSSSSSVSVP) shows a compositional bias: low complexity. Residues 280–747 (VPGTGVFRVN…TQLLHNMWGL (468 aa)) form a catalytic region. Catalysis depends on glutamate 502, which acts as the Proton donor. Glutamate 652 acts as the Nucleophile in catalysis.

Belongs to the glycosyl hydrolase 5 (cellulase A) family.

The enzyme catalyses Endohydrolysis of (1-&gt;4)-beta-D-glucosidic linkages in cellulose, lichenin and cereal beta-D-glucans.. The polypeptide is Endoglucanase C (celC) (Cellvibrio japonicus (strain Ueda107) (Pseudomonas fluorescens subsp. cellulosa)).